A 205-amino-acid polypeptide reads, in one-letter code: Thymidine kinase (205 aa).

ATP-binding positions include Ser9 to Ser16 and Asp87 to Gln90. Glu88 (proton acceptor) is an active-site residue. Zn(2+) contacts are provided by Cys145, Cys147, Cys182, and His185.

This sequence belongs to the thymidine kinase family. Homotetramer.

It is found in the cytoplasm. The catalysed reaction is thymidine + ATP = dTMP + ADP + H(+). The protein is Thymidine kinase of Shigella dysenteriae serotype 1 (strain Sd197).